Consider the following 729-residue polypeptide: Phosphoribosylformylglycinamidine synthase subunit PurL (729 aa).

His-54 is a catalytic residue. Tyr-57 and Lys-96 together coordinate ATP. Glu-98 lines the Mg(2+) pocket. Residues 99–102 (SHNH) and Arg-121 contribute to the substrate site. His-100 (proton acceptor) is an active-site residue. Residue Asp-122 participates in Mg(2+) binding. Gln-245 lines the substrate pocket. Asp-273 is a binding site for Mg(2+). 317-319 (ETQ) is a substrate binding site. The ATP site is built by Asp-495 and Gly-532. Asn-533 contacts Mg(2+). Residue Ser-535 coordinates substrate.

The protein belongs to the FGAMS family. In terms of assembly, monomer. Part of the FGAM synthase complex composed of 1 PurL, 1 PurQ and 2 PurS subunits.

Its subcellular location is the cytoplasm. It catalyses the reaction N(2)-formyl-N(1)-(5-phospho-beta-D-ribosyl)glycinamide + L-glutamine + ATP + H2O = 2-formamido-N(1)-(5-O-phospho-beta-D-ribosyl)acetamidine + L-glutamate + ADP + phosphate + H(+). It functions in the pathway purine metabolism; IMP biosynthesis via de novo pathway; 5-amino-1-(5-phospho-D-ribosyl)imidazole from N(2)-formyl-N(1)-(5-phospho-D-ribosyl)glycinamide: step 1/2. Its function is as follows. Part of the phosphoribosylformylglycinamidine synthase complex involved in the purines biosynthetic pathway. Catalyzes the ATP-dependent conversion of formylglycinamide ribonucleotide (FGAR) and glutamine to yield formylglycinamidine ribonucleotide (FGAM) and glutamate. The FGAM synthase complex is composed of three subunits. PurQ produces an ammonia molecule by converting glutamine to glutamate. PurL transfers the ammonia molecule to FGAR to form FGAM in an ATP-dependent manner. PurS interacts with PurQ and PurL and is thought to assist in the transfer of the ammonia molecule from PurQ to PurL. The polypeptide is Phosphoribosylformylglycinamidine synthase subunit PurL (Staphylococcus epidermidis (strain ATCC 35984 / DSM 28319 / BCRC 17069 / CCUG 31568 / BM 3577 / RP62A)).